We begin with the raw amino-acid sequence, 201 residues long: Recombination protein RecR (201 aa).

The C4-type zinc-finger motif lies at cysteine 57 to cysteine 72. In terms of domain architecture, Toprim spans glycine 81–proline 176.

It belongs to the RecR family.

Its function is as follows. May play a role in DNA repair. It seems to be involved in an RecBC-independent recombinational process of DNA repair. It may act with RecF and RecO. The protein is Recombination protein RecR of Citrobacter koseri (strain ATCC BAA-895 / CDC 4225-83 / SGSC4696).